The chain runs to 506 residues: Proline--tRNA ligase (506 aa).

The protein belongs to the class-II aminoacyl-tRNA synthetase family. ProS type 3 subfamily. In terms of assembly, homodimer.

The protein localises to the cytoplasm. The enzyme catalyses tRNA(Pro) + L-proline + ATP = L-prolyl-tRNA(Pro) + AMP + diphosphate. Catalyzes the attachment of proline to tRNA(Pro) in a two-step reaction: proline is first activated by ATP to form Pro-AMP and then transferred to the acceptor end of tRNA(Pro). This Rhodopirellula baltica (strain DSM 10527 / NCIMB 13988 / SH1) protein is Proline--tRNA ligase.